The chain runs to 243 residues: MLIIPAIDLKDGQCVRLRQGLMDDSTVFSDDPVAMARQWVDQGCRRLHLVDLNGAFEGKPVNGGVVTAIAKAYPGLPIQIGGGIRSAATIEYYLQAGVQSVIIGTKAVKEPQFVTDMCKAFPGHIIVGLDAKDGWVATDGWAEVSNVQATELAKRFEQDGVSSIVYTDIARDGMMQGVNVQATVTMAQASSIPVIASGGITNMDDIRALKAEAHKGICGAITGRAIYEGTLNMAEAQAYCDAN.

Asp-8 acts as the Proton acceptor in catalysis. Asp-130 serves as the catalytic Proton donor.

It belongs to the HisA/HisF family.

Its subcellular location is the cytoplasm. The catalysed reaction is 1-(5-phospho-beta-D-ribosyl)-5-[(5-phospho-beta-D-ribosylamino)methylideneamino]imidazole-4-carboxamide = 5-[(5-phospho-1-deoxy-D-ribulos-1-ylimino)methylamino]-1-(5-phospho-beta-D-ribosyl)imidazole-4-carboxamide. Its pathway is amino-acid biosynthesis; L-histidine biosynthesis; L-histidine from 5-phospho-alpha-D-ribose 1-diphosphate: step 4/9. This is 1-(5-phosphoribosyl)-5-[(5-phosphoribosylamino)methylideneamino] imidazole-4-carboxamide isomerase from Cellvibrio japonicus (strain Ueda107) (Pseudomonas fluorescens subsp. cellulosa).